A 727-amino-acid chain; its full sequence is Tubulin polyglutamylase TTLL11 (727 aa).

The span at 1–12 (MRRSSPEKKPEA) shows a compositional bias: basic and acidic residues. The disordered stretch occupies residues 1-88 (MRRSSPEKKP…ARVVRRLPPA (88 aa)). Positions 17 to 34 (DAAAAAAATAAATESLPA) are enriched in low complexity. 2 stretches are compositionally biased toward basic and acidic residues: residues 49 to 63 (DPER…KDVG) and 72 to 81 (HAPEEGEARV). Positions 125–477 (PVTVDSSKAR…EVKVAVIRDT (353 aa)) constitute a TTL domain. Residues Lys246, 252–253 (QG), 279–282 (QEYI), and 292–294 (KFD) contribute to the ATP site. Gln252 is an a protein binding site. Arg318 is an L-glutamate binding site. 340-341 (TN) contacts ATP. L-glutamate is bound by residues Tyr342, Ser343, and Lys362. Mg(2+) is bound by residues Asp425, Glu438, and Asn440. Positions 464–566 (LVDEEVKVAV…SICLKQVFPK (103 aa)) are c-MTBD region. An L-glutamate-binding site is contributed by Lys470. Disordered stretches follow at residues 530 to 551 (KSFT…EPNP) and 694 to 727 (RPLQ…LSQS).

Belongs to the tubulin--tyrosine ligase family. The cofactor is Mg(2+). In terms of tissue distribution, highly expressed in brain, kidney, liver, lung, muscle and testis. Expressed in heart, spleen and trachea. In the brain, expressed in ependymal cilia, cortex, corpus callosum and striatum.

The protein localises to the cytoplasm. It is found in the cytoskeleton. The protein resides in the cilium basal body. The enzyme catalyses L-glutamyl-[protein] + L-glutamate + ATP = gamma-L-glutamyl-L-glutamyl-[protein] + ADP + phosphate + H(+). It carries out the reaction (L-glutamyl)(n)-gamma-L-glutamyl-L-glutamyl-[protein] + L-glutamate + ATP = (L-glutamyl)(n+1)-gamma-L-glutamyl-L-glutamyl-[protein] + ADP + phosphate + H(+). Functionally, polyglutamylase which modifies tubulin, generating polyglutamate side chains of variable lengths on the gamma-carboxyl group of specific glutamate residues within the C-terminal tail of tubulin. Preferentially mediates ATP-dependent polyglutamate long side-chain elongation over the initiation step of the polyglutamylation reaction. Preferentially modifies the alpha-tubulin tail over a beta-tail. Required for CCSAP localization to both spindle and cilia microtubules. Promotes tubulin polyglutamylation which stimulates spastin/SPAST-mediated microtubule severing, thereby regulating microtubule functions. This is Tubulin polyglutamylase TTLL11 from Mus musculus (Mouse).